We begin with the raw amino-acid sequence, 143 residues long: Small ribosomal subunit protein uS11c (143 aa).

The protein belongs to the universal ribosomal protein uS11 family. As to quaternary structure, part of the 30S ribosomal subunit.

It localises to the plastid. Its subcellular location is the chloroplast. The sequence is that of Small ribosomal subunit protein uS11c from Cenchrus americanus (Pearl millet).